A 150-amino-acid polypeptide reads, in one-letter code: Deoxyuridine 5'-triphosphate nucleotidohydrolase (150 aa).

Substrate is bound by residues Arg70 to Gly72, Asn82, Leu86 to Asp88, and Met96.

The protein belongs to the dUTPase family. Mg(2+) is required as a cofactor.

The enzyme catalyses dUTP + H2O = dUMP + diphosphate + H(+). The protein operates within pyrimidine metabolism; dUMP biosynthesis; dUMP from dCTP (dUTP route): step 2/2. Functionally, this enzyme is involved in nucleotide metabolism: it produces dUMP, the immediate precursor of thymidine nucleotides and it decreases the intracellular concentration of dUTP so that uracil cannot be incorporated into DNA. The protein is Deoxyuridine 5'-triphosphate nucleotidohydrolase of Baumannia cicadellinicola subsp. Homalodisca coagulata.